The primary structure comprises 141 residues: Large ribosomal subunit protein uL11 (141 aa).

This sequence belongs to the universal ribosomal protein uL11 family. As to quaternary structure, part of the ribosomal stalk of the 50S ribosomal subunit. Interacts with L10 and the large rRNA to form the base of the stalk. L10 forms an elongated spine to which L12 dimers bind in a sequential fashion forming a multimeric L10(L12)X complex. In terms of processing, one or more lysine residues are methylated.

Its function is as follows. Forms part of the ribosomal stalk which helps the ribosome interact with GTP-bound translation factors. The sequence is that of Large ribosomal subunit protein uL11 from Acaryochloris marina (strain MBIC 11017).